The following is a 32-amino-acid chain: Cytochrome b6-f complex subunit 7 (32 aa).

A helical transmembrane segment spans residues 9–29 (AILSSVLVLVGLAVGFLLLKV).

It belongs to the PetM family. As to quaternary structure, the 4 large subunits of the cytochrome b6-f complex are cytochrome b6, subunit IV (17 kDa polypeptide, PetD), cytochrome f and the Rieske protein, while the 4 small subunits are PetG, PetL, PetM and PetN. The complex functions as a dimer.

It localises to the plastid. The protein localises to the chloroplast thylakoid membrane. Its function is as follows. Component of the cytochrome b6-f complex, which mediates electron transfer between photosystem II (PSII) and photosystem I (PSI), cyclic electron flow around PSI, and state transitions. The polypeptide is Cytochrome b6-f complex subunit 7 (Porphyra purpurea (Red seaweed)).